Reading from the N-terminus, the 700-residue chain is Peroxisomal acyl-coenzyme A oxidase 1 (700 aa).

Residues threonine 147, glycine 186, and 412–417 (CGGHGY) contribute to the FAD site. The active-site Proton acceptor is the glutamate 437. The Microbody targeting signal motif lies at 698–700 (SKL).

Belongs to the acyl-CoA oxidase family. The cofactor is FAD.

The protein localises to the peroxisome. It carries out the reaction a 2,3-saturated acyl-CoA + O2 = a (2E)-enoyl-CoA + H2O2. Catalyzes the desaturation of acyl-CoAs to 2-trans-enoyl-CoAs. First enzyme of the fatty acid beta-oxidation pathway. This Dictyostelium discoideum (Social amoeba) protein is Peroxisomal acyl-coenzyme A oxidase 1 (acox1).